A 561-amino-acid chain; its full sequence is Solute carrier family 41 member 2 (561 aa).

The Extracellular segment spans residues 1–150; the sequence is MTANTGEPYK…KESSIAMALQ (150 aa). Residues 151-171 traverse the membrane as a helical segment; it reads ILVPFLLAGFGTVSAGMVLDI. Over 172 to 183 the chain is Cytoplasmic; the sequence is VQHWDVFKNLTE. The chain crosses the membrane as a helical span at residues 184-204; it reads VFILVPALLGLKGNLEMTLAS. The Extracellular segment spans residues 205 to 233; that stretch reads RLSTAVNVGKMDSPIEKWNLIIGNLALKQ. A helical transmembrane segment spans residues 234–254; sequence VQATVVGFLAAVFAVILGWIP. Residues 255 to 270 lie on the Cytoplasmic side of the membrane; that stretch reads DGKYQLDHAILLCSSS. A helical membrane pass occupies residues 271–291; that stretch reads VATAFIASLLQGIIMVGVIVG. The Extracellular segment spans residues 292–301; that stretch reads SKKTGINPDN. The helical transmembrane segment at 302–322 threads the bilayer; the sequence is VATPIAASFGDLITLAILAWI. Topologically, residues 323-333 are cytoplasmic; that stretch reads SQGLYNCLGSY. A helical membrane pass occupies residues 334-354; that stretch reads AFVSPLVGVFFLAMTPIWIVI. Residues 355-364 lie on the Extracellular side of the membrane; it reads ASKHPATRTV. A helical transmembrane segment spans residues 365 to 385; sequence LHSGWEPVITAMLISSIGGLI. Residues 386–394 lie on the Cytoplasmic side of the membrane; that stretch reads LDTTVSDPN. The helical transmembrane segment at 395–415 threads the bilayer; the sequence is LVGIVVYTPVINGIGGNLVAI. At 416 to 457 the chain is on the extracellular side; that stretch reads QASRISTYLHLYSIPGELPEDAKGCYHPCRTFCGTGVNNKSA. The chain crosses the membrane as a helical span at residues 458-478; it reads QVLLSLVIPGHLIFLYTIYLM. At 479–487 the chain is on the cytoplasmic side; sequence KSGHTSLTP. A helical membrane pass occupies residues 488–508; it reads IFVAVYLLAALLQVFALLWIA. Residues 509–531 lie on the Extracellular side of the membrane; that stretch reads DWMVHHIWRKGKDPDSFSIPYLT. The chain crosses the membrane as a helical span at residues 532-552; it reads ALGDLLGTALLAISFHILWII. Topologically, residues 553–561 are cytoplasmic; the sequence is GDRDGDVGD.

The protein belongs to the SLC41A transporter family.

It localises to the cell membrane. The enzyme catalyses Mg(2+)(in) = Mg(2+)(out). It catalyses the reaction Mn(2+)(in) = Mn(2+)(out). It carries out the reaction Co(2+)(in) = Co(2+)(out). The catalysed reaction is Ni(2+)(in) = Ni(2+)(out). The enzyme catalyses Fe(2+)(in) = Fe(2+)(out). Functionally, acts as a plasma-membrane magnesium transporter. Can also mediate the transport of other divalent metal cations in an order of Ba(2+) &gt; Ni(2+) &gt; Co(2+) &gt; Fe(2+) &gt; Mn(2+). The sequence is that of Solute carrier family 41 member 2 (slc41a2) from Xenopus laevis (African clawed frog).